The chain runs to 173 residues: Transcription factor E (173 aa).

The region spanning 9–92 is the HTH TFE/IIEalpha-type domain; the sequence is NNPATRAYIH…LWQLRIDLLY (84 aa).

It belongs to the TFE family. Monomer. Interaction with RNA polymerase subunits RpoF and RpoE is necessary for Tfe stimulatory transcription activity. Able to interact with Tbp and RNA polymerase in the absence of DNA promoter. Interacts both with the preinitiation and elongation complexes.

In terms of biological role, transcription factor that plays a role in the activation of archaeal genes transcribed by RNA polymerase. Facilitates transcription initiation by enhancing TATA-box recognition by TATA-box-binding protein (Tbp), and transcription factor B (Tfb) and RNA polymerase recruitment. Not absolutely required for transcription in vitro, but particularly important in cases where Tbp or Tfb function is not optimal. It dynamically alters the nucleic acid-binding properties of RNA polymerases by stabilizing the initiation complex and destabilizing elongation complexes. Seems to translocate with the RNA polymerase following initiation and acts by binding to the non template strand of the transcription bubble in elongation complexes. The chain is Transcription factor E from Methanoregula boonei (strain DSM 21154 / JCM 14090 / 6A8).